A 214-amino-acid polypeptide reads, in one-letter code: Phosphoenolpyruvate guanylyltransferase (214 aa).

The phosphoenolpyruvate site is built by Thr-148, Gly-163, and Ser-166.

This sequence belongs to the CofC family.

It carries out the reaction phosphoenolpyruvate + GTP + H(+) = enolpyruvoyl-2-diphospho-5'-guanosine + diphosphate. Its pathway is cofactor biosynthesis; coenzyme F420 biosynthesis. Its function is as follows. Guanylyltransferase that catalyzes the activation of phosphoenolpyruvate (PEP) as enolpyruvoyl-2-diphospho-5'-guanosine, via the condensation of PEP with GTP. It is involved in the biosynthesis of coenzyme F420, a hydride carrier cofactor. This is Phosphoenolpyruvate guanylyltransferase from Mycolicibacterium gilvum (strain PYR-GCK) (Mycobacterium gilvum (strain PYR-GCK)).